A 127-amino-acid chain; its full sequence is MTEEVNPKAFPLADAQLTAKIMNLLQQALNYNQLRKGANEATKTLNRGLADIVVLAGDAEPIEILLHLPLLCEDKNVPYVFVRSKQALGRACGVSRPIVACSVTTNEGSQLKSQITSIQQEIERLLV.

This sequence belongs to the eukaryotic ribosomal protein eL8 family.

It localises to the nucleus. It is found in the nucleolus. Binds to the 5'-stem-loop of U4 snRNA and may play a role in the late stage of spliceosome assembly. The protein undergoes a conformational change upon RNA-binding. The polypeptide is NHP2-like protein 1 homolog (hoip) (Drosophila melanogaster (Fruit fly)).